The primary structure comprises 282 residues: NFU1 iron-sulfur cluster scaffold homolog, mitochondrial (282 aa).

The transit peptide at 1-27 (MSKLLSYTARIILRNSRITVRQLVRGF) directs the protein to the mitochondrion. The tract at residues 178–246 (IKELLDTRIR…IPEVESVEQV (69 aa)) is nifU. The [4Fe-4S] cluster site is built by C215 and C218. A disordered region spans residues 263–282 (KNLKQKEPAGAPVGIGGGPN).

It belongs to the NifU family.

It is found in the mitochondrion. Functionally, molecular scaffold for [Fe-S] cluster assembly of mitochondrial iron-sulfur proteins. This Drosophila persimilis (Fruit fly) protein is NFU1 iron-sulfur cluster scaffold homolog, mitochondrial.